Consider the following 423-residue polypeptide: Cyclin-dependent kinase 14 (423 aa).

The interval 62–85 is disordered; the sequence is VGKESPKVRRHSSPSSPTSPKFGK. The 285-residue stretch at 89 to 373 folds into the Protein kinase domain; it reads YEKLEKLGEG…AQAALNHDYF (285 aa). Residues 95–103 and Lys118 contribute to the ATP site; that span reads LGEGSYATV. The Proton acceptor role is filled by Asp210.

This sequence belongs to the protein kinase superfamily. CMGC Ser/Thr protein kinase family. CDC2/CDKX subfamily. In terms of assembly, interacts with ccny; ccny mediates its recruitment to the plasma membrane and promotes phosphorylation of lrp6.

It is found in the cell membrane. The catalysed reaction is L-seryl-[protein] + ATP = O-phospho-L-seryl-[protein] + ADP + H(+). It catalyses the reaction L-threonyl-[protein] + ATP = O-phospho-L-threonyl-[protein] + ADP + H(+). Serine/threonine-protein kinase involved in the control of the eukaryotic cell cycle, whose activity is controlled by an associated cyclin. Acts as a cell-cycle regulator of Wnt signaling pathway during G2/M phase by mediating the phosphorylation of lrp6, leading to the activation of the Wnt signaling pathway. The sequence is that of Cyclin-dependent kinase 14 (cdk14) from Xenopus tropicalis (Western clawed frog).